The following is a 371-amino-acid chain: Phosphate acyltransferase (371 aa).

This sequence belongs to the PlsX family. As to quaternary structure, homodimer. Probably interacts with PlsY.

Its subcellular location is the cytoplasm. It catalyses the reaction a fatty acyl-[ACP] + phosphate = an acyl phosphate + holo-[ACP]. The protein operates within lipid metabolism; phospholipid metabolism. Its function is as follows. Catalyzes the reversible formation of acyl-phosphate (acyl-PO(4)) from acyl-[acyl-carrier-protein] (acyl-ACP). This enzyme utilizes acyl-ACP as fatty acyl donor, but not acyl-CoA. The sequence is that of Phosphate acyltransferase from Ruegeria pomeroyi (strain ATCC 700808 / DSM 15171 / DSS-3) (Silicibacter pomeroyi).